The following is a 304-amino-acid chain: uncharacterized protein (304 aa).

9 helical membrane passes run 9 to 29 (VFYV…SIHF), 67 to 87 (IILY…GNMF), 100 to 120 (AGSI…GIFF), 131 to 151 (EFYI…INSS), 159 to 179 (FFLG…QNLI), 189 to 209 (AVVI…CLAF), 222 to 242 (IGML…GMLM), 252 to 272 (ITVF…IGYL), and 278 to 298 (INIY…LALK). 2 consecutive EamA domains span residues 13 to 148 (LLMG…IFVI) and 171 to 298 (FIQS…LALK).

This sequence belongs to the EamA transporter family.

The protein localises to the cell membrane. This is an uncharacterized protein from Haemophilus influenzae (strain ATCC 51907 / DSM 11121 / KW20 / Rd).